We begin with the raw amino-acid sequence, 314 residues long: Synaptophysin (314 aa).

Over 1-25 (MLLLADMDVVNQLVAGGQFRVVKEP) the chain is Cytoplasmic. The region spanning 21-228 (VVKEPLGFVK…NLWFVFKETG (208 aa)) is the MARVEL domain. Residues 26 to 49 (LGFVKVLQWVFAIFAFATCGSYTG) form a helical membrane-spanning segment. At 50–107 (ELRLSVECANKTESALNIEVEFEYPFRLHQVYFDAPSCVKGGTTKIFLVGDYSSSAEF) the chain is on the vesicular side. N-linked (GlcNAc...) asparagine glycosylation occurs at Asn-59. Tyr-81 carries the phosphotyrosine modification. Residues 108 to 131 (FVTVAVFAFLYSMGALATYIFLQN) form a helical membrane-spanning segment. Topologically, residues 132–138 (KYRENNK) are cytoplasmic. Residues 139-162 (GPMMDFLATAVFAFMWLVSSSAWA) traverse the membrane as a helical segment. Over 163-200 (KGLSDVKMATDPENIIKEMPMCRQTGNTCKELRDPVTS) the chain is Vesicular. A helical transmembrane segment spans residues 201-224 (GLNTSVVFGFLNLVLWVGNLWFVF). At 225–314 (KETGWAAPFM…GAPTSFSNQM (90 aa)) the chain is on the cytoplasmic side. Phosphothreonine is present on Thr-227. The disordered stretch occupies residues 239-314 (GAPEKQPAPG…GAPTSFSNQM (76 aa)). Residues 254-264 (AGYGQGPGGYG) show a composition bias toward gly residues. Residues 255-305 (GYGQGPGGYGPQDSYGPQGGYQPDYGQPASGGGGGYGPQGDYGQQGYGQQG) form a repeats, Gly-rich region. Over residues 265–282 (PQDSYGPQGGYQPDYGQP) the composition is skewed to low complexity. A phosphotyrosine mark is found at Tyr-279 and Tyr-296. Residues 283 to 303 (ASGGGGGYGPQGDYGQQGYGQ) show a composition bias toward gly residues.

It belongs to the synaptophysin/synaptobrevin family. Homohexamer or homotetramer. Interacts with SRCIN1. Interacts with VAMP2; the interaction is inhibited by interaction of VAPM2 with SEPT8. Ubiquitinated; mediated by SIAH1 or SIAH2 and leading to its subsequent proteasomal degradation. In terms of processing, phosphorylated by SRC.

The protein resides in the cytoplasmic vesicle. The protein localises to the secretory vesicle. It is found in the synaptic vesicle membrane. It localises to the synapse. Its subcellular location is the synaptosome. Its function is as follows. Possibly involved in structural functions as organizing other membrane components or in targeting the vesicles to the plasma membrane. Involved in the regulation of short-term and long-term synaptic plasticity. The sequence is that of Synaptophysin (Syp) from Mus musculus (Mouse).